Reading from the N-terminus, the 315-residue chain is Biotin synthase (315 aa).

The Radical SAM core domain maps to 39–266; it reads NSLQFATLLS…KSAIRLTAGR (228 aa). [4Fe-4S] cluster-binding residues include Cys54, Cys58, and Cys61. Positions 98, 129, 189, and 261 each coordinate [2Fe-2S] cluster.

It belongs to the radical SAM superfamily. Biotin synthase family. As to quaternary structure, homodimer. Requires [4Fe-4S] cluster as cofactor. It depends on [2Fe-2S] cluster as a cofactor.

It catalyses the reaction (4R,5S)-dethiobiotin + (sulfur carrier)-SH + 2 reduced [2Fe-2S]-[ferredoxin] + 2 S-adenosyl-L-methionine = (sulfur carrier)-H + biotin + 2 5'-deoxyadenosine + 2 L-methionine + 2 oxidized [2Fe-2S]-[ferredoxin]. The protein operates within cofactor biosynthesis; biotin biosynthesis; biotin from 7,8-diaminononanoate: step 2/2. Catalyzes the conversion of dethiobiotin (DTB) to biotin by the insertion of a sulfur atom into dethiobiotin via a radical-based mechanism. This chain is Biotin synthase, found in Legionella pneumophila (strain Corby).